We begin with the raw amino-acid sequence, 335 residues long: Large ribosomal subunit protein uL10 (335 aa).

The interval 304 to 335 is disordered; that stretch reads GAAAPVEEAPVEEKKEEKKEEAAPAAGLGMLF. Residues 314-325 are compositionally biased toward basic and acidic residues; the sequence is VEEKKEEKKEEA.

Belongs to the universal ribosomal protein uL10 family. Part of the 50S ribosomal subunit. Forms part of the ribosomal stalk which helps the ribosome interact with GTP-bound translation factors. Forms a heptameric L10(L12)2(L12)2(L12)2 complex, where L10 forms an elongated spine to which the L12 dimers bind in a sequential fashion.

In terms of biological role, forms part of the ribosomal stalk, playing a central role in the interaction of the ribosome with GTP-bound translation factors. This chain is Large ribosomal subunit protein uL10, found in Methanococcus maripaludis (strain C6 / ATCC BAA-1332).